Reading from the N-terminus, the 67-residue chain is uncharacterized protein (67 aa).

Residues 1–28 form the signal peptide; the sequence is MSHVSVIAARLLVWVGILLCLGVPQLWA. N39 carries N-linked (GlcNAc...) asparagine; by host glycosylation.

This is an uncharacterized protein from Invertebrate iridescent virus 3 (IIV-3).